Reading from the N-terminus, the 213-residue chain is Ribosomal RNA large subunit methyltransferase E (213 aa).

S-adenosyl-L-methionine contacts are provided by Gly60, Trp62, Asp80, Asp96, and Asp121. Residue Lys161 is the Proton acceptor of the active site.

This sequence belongs to the class I-like SAM-binding methyltransferase superfamily. RNA methyltransferase RlmE family.

It localises to the cytoplasm. The catalysed reaction is uridine(2552) in 23S rRNA + S-adenosyl-L-methionine = 2'-O-methyluridine(2552) in 23S rRNA + S-adenosyl-L-homocysteine + H(+). Its function is as follows. Specifically methylates the uridine in position 2552 of 23S rRNA at the 2'-O position of the ribose in the fully assembled 50S ribosomal subunit. The chain is Ribosomal RNA large subunit methyltransferase E from Xylella fastidiosa (strain M23).